The chain runs to 289 residues: Ribonuclease Z (289 aa).

7 residues coordinate Zn(2+): His63, His65, Asp67, His68, His143, Asp197, and His255. The active-site Proton acceptor is Asp67.

It belongs to the RNase Z family. As to quaternary structure, homodimer. Zn(2+) is required as a cofactor.

The catalysed reaction is Endonucleolytic cleavage of RNA, removing extra 3' nucleotides from tRNA precursor, generating 3' termini of tRNAs. A 3'-hydroxy group is left at the tRNA terminus and a 5'-phosphoryl group is left at the trailer molecule.. In terms of biological role, zinc phosphodiesterase, which displays some tRNA 3'-processing endonuclease activity. Probably involved in tRNA maturation, by removing a 3'-trailer from precursor tRNA. This Azobacteroides pseudotrichonymphae genomovar. CFP2 protein is Ribonuclease Z.